A 180-amino-acid chain; its full sequence is NAD(P)H-quinone oxidoreductase subunit I, chloroplastic (180 aa).

4Fe-4S ferredoxin-type domains follow at residues 55-84 and 95-124; these read GRIH…VDWK and LNYS…MTEE. [4Fe-4S] cluster contacts are provided by Cys64, Cys67, Cys70, Cys74, Cys104, Cys107, Cys110, and Cys114.

This sequence belongs to the complex I 23 kDa subunit family. In terms of assembly, NDH is composed of at least 16 different subunits, 5 of which are encoded in the nucleus. [4Fe-4S] cluster is required as a cofactor.

The protein localises to the plastid. The protein resides in the chloroplast thylakoid membrane. It carries out the reaction a plastoquinone + NADH + (n+1) H(+)(in) = a plastoquinol + NAD(+) + n H(+)(out). The enzyme catalyses a plastoquinone + NADPH + (n+1) H(+)(in) = a plastoquinol + NADP(+) + n H(+)(out). Its function is as follows. NDH shuttles electrons from NAD(P)H:plastoquinone, via FMN and iron-sulfur (Fe-S) centers, to quinones in the photosynthetic chain and possibly in a chloroplast respiratory chain. The immediate electron acceptor for the enzyme in this species is believed to be plastoquinone. Couples the redox reaction to proton translocation, and thus conserves the redox energy in a proton gradient. This is NAD(P)H-quinone oxidoreductase subunit I, chloroplastic from Sorghum bicolor (Sorghum).